The sequence spans 98 residues: NADH-ubiquinone oxidoreductase chain 4L (98 aa).

Transmembrane regions (helical) follow at residues 1–21 (MPIIYMNIMLSFIISLLGMLI), 29–49 (SLLCLEGMMLSLFIMSTLMAL), and 58–78 (IVPVALLVFAACEAAVGLALL).

It belongs to the complex I subunit 4L family. In terms of assembly, core subunit of respiratory chain NADH dehydrogenase (Complex I) which is composed of 45 different subunits.

It localises to the mitochondrion inner membrane. The enzyme catalyses a ubiquinone + NADH + 5 H(+)(in) = a ubiquinol + NAD(+) + 4 H(+)(out). Core subunit of the mitochondrial membrane respiratory chain NADH dehydrogenase (Complex I) which catalyzes electron transfer from NADH through the respiratory chain, using ubiquinone as an electron acceptor. Part of the enzyme membrane arm which is embedded in the lipid bilayer and involved in proton translocation. This chain is NADH-ubiquinone oxidoreductase chain 4L (MT-ND4L), found in Semnopithecus entellus (Northern plains gray langur).